Consider the following 642-residue polypeptide: Regulator of MON1-CCZ1 complex (642 aa).

One can recognise a Mic1 domain in the interval 462 to 616 (RPYTESILML…KLYETLSFPK (155 aa)).

It belongs to the RMC1 family. Component of the Mon1-Ccz1 guanyl-nucleotide exchange factor complex made up of Mon1, Ccz1 and Bulli; the interaction of Bulli with the Mon1-Ccz1 heterodimer is mediated via the C-terminal Mic1 domain of Bulli. Mon1 and Ccz1 form a stable complex which displays Rab7 GEF activity with or without Bulli; GEF activity is enhanced by Bulli possibly by improving membrane association of the complex.

It localises to the late endosome. Its function is as follows. Positive regulator of the Rab7 guanyl-nucleotide exchange activity of the Mon1-Ccz1 complex, possibly by enhancing its endosomal membrane association. As part of the Mon1-Ccz1 complex involved in endolysosomal biogenesis possibly by mediating Rab conversion, the replacement of Rab5 with Rab7 during late endosome maturation. The chain is Regulator of MON1-CCZ1 complex from Drosophila melanogaster (Fruit fly).